The primary structure comprises 1148 residues: Putative transcription factor SEF1 (1148 aa).

The disordered stretch occupies residues 1–51 (MVKDNRDSDQDQDFSSAHMKRQPEQQQLQQHQFPSKKQRISHHDDSHQINH). Phosphoserine is present on serine 8. A DNA-binding region (zn(2)-C6 fungal-type) is located at residues 57 to 87 (CTHCRQHKIKCDASQNFPHPCSRCEKIGLHC). Positions 148–180 (PTPGTIIPNPDSSPSSGSPTSSAAQRDSKVSVQ) are disordered. Positions 150-169 (PGTIIPNPDSSPSSGSPTSS) are enriched in low complexity. A Phosphoserine modification is found at serine 263. Residues 524-550 (EESEEDNNDSIDNNNNDKRNKKDEPHV) form a disordered region. Over residues 538–550 (NNDKRNKKDEPHV) the composition is skewed to basic and acidic residues. Residue serine 806 is modified to Phosphoserine. A compositionally biased stretch (polar residues) spans 1029-1050 (RSQSSMSHSRTPIASKSNNMTD). The segment at 1029–1063 (RSQSSMSHSRTPIASKSNNMTDLHSVVSDPGSSKS) is disordered.

It is found in the nucleus. Functionally, putative transcription factor that seems to be involved in the sporulation process. Suppresses the lethal phenotype of RPM2 deletion. This chain is Putative transcription factor SEF1 (SEF1), found in Saccharomyces cerevisiae (strain ATCC 204508 / S288c) (Baker's yeast).